Here is a 213-residue protein sequence, read N- to C-terminus: Motile sperm domain-containing protein 1 (213 aa).

In terms of domain architecture, MSP spans 16-143 (PVFVFPTELI…KEHLTESVFF (128 aa)). 2 helical membrane passes run 159 to 179 (SLLTVFLGVVCIAALMLPTLG) and 191 to 211 (LSVNQKLVAAYILGLITMAIL). The short motif at 205–208 (LITM) is the Nuclear export signal element.

Widely expressed. Shows highest expression in ribs, and slightly lower levels of expression in heart, kidney, muscle, thymus, calvariae and lung. Also detected at low levels in spleen and liver.

The protein resides in the endoplasmic reticulum membrane. The protein localises to the golgi apparatus membrane. Plays a role in differentiation and/or proliferation of mesenchymal stem cells. Proposed to be involved in epithelial-to-mesenchymal transition (EMT). However, another study suggests that it is not required for EMT or stem cell self-renewal and acts during later stages of differentiation. This chain is Motile sperm domain-containing protein 1 (Mospd1), found in Mus musculus (Mouse).